Here is a 79-residue protein sequence, read N- to C-terminus: Sec-independent protein translocase protein TatA (79 aa).

A helical membrane pass occupies residues 1–21 (MGGFTSIWHWVIVLLVIVLLF). The disordered stretch occupies residues 48 to 79 (EEEAKNEPKTLDAQVTQAKVHESSEIKNKQEG). The span at 66–79 (KVHESSEIKNKQEG) shows a compositional bias: basic and acidic residues.

Belongs to the TatA/E family. In terms of assembly, the Tat system comprises two distinct complexes: a TatABC complex, containing multiple copies of TatA, TatB and TatC subunits, and a separate TatA complex, containing only TatA subunits. Substrates initially bind to the TatABC complex, which probably triggers association of the separate TatA complex to form the active translocon.

It is found in the cell inner membrane. Functionally, part of the twin-arginine translocation (Tat) system that transports large folded proteins containing a characteristic twin-arginine motif in their signal peptide across membranes. TatA could form the protein-conducting channel of the Tat system. The protein is Sec-independent protein translocase protein TatA of Helicobacter acinonychis (strain Sheeba).